A 222-amino-acid polypeptide reads, in one-letter code: Pyridoxal phosphate homeostasis protein (222 aa).

The residue at position 35 (K35) is an N6-(pyridoxal phosphate)lysine.

This sequence belongs to the pyridoxal phosphate-binding protein YggS/PROSC family.

In terms of biological role, pyridoxal 5'-phosphate (PLP)-binding protein, which is involved in PLP homeostasis. In Helicobacter pylori (strain ATCC 700392 / 26695) (Campylobacter pylori), this protein is Pyridoxal phosphate homeostasis protein.